The sequence spans 704 residues: Probable serine/threonine-protein kinase WNK1 (704 aa).

The region spanning 27 to 284 (GRYNDVLGKG…ARELLKDPFL (258 aa)) is the Protein kinase domain. Residues 107–110 (TEMF) and lysine 157 each bind ATP. The Proton acceptor role is filled by aspartate 174. The interval 499–521 (QTDLQDSGGSSDDGGGQTQHVKD) is disordered.

Belongs to the protein kinase superfamily. Ser/Thr protein kinase family. WNK subfamily.

It catalyses the reaction L-seryl-[protein] + ATP = O-phospho-L-seryl-[protein] + ADP + H(+). The enzyme catalyses L-threonyl-[protein] + ATP = O-phospho-L-threonyl-[protein] + ADP + H(+). The polypeptide is Probable serine/threonine-protein kinase WNK1 (WNK1) (Oryza sativa subsp. japonica (Rice)).